The following is a 553-amino-acid chain: Phosphoglucomutase (553 aa).

Positions 1–25 (MQATIKRYPTSPISGQTLGTSGLRK) are disordered. The span at 11-20 (SPISGQTLGT) shows a compositional bias: polar residues. Substrate is bound by residues T20, R24, 117–118 (SH), and K131. S117 (phosphoserine intermediate) is an active-site residue. S117 contributes to the Mg(2+) binding site. Residues D289, D291, and D293 each contribute to the Mg(2+) site. Residues 293–294 (DR), T352, 371–373 (EES), K384, and R509 each bind substrate.

It belongs to the phosphohexose mutase family. Requires Mg(2+) as cofactor.

It localises to the cytoplasm. It catalyses the reaction alpha-D-glucose 1-phosphate = alpha-D-glucose 6-phosphate. Functionally, catalyzes the reversible conversion of glucose 1-phosphate into glucose 6-phosphate. This enzyme participates in both the breakdown and synthesis of glucose. This Entamoeba histolytica (strain ATCC 30459 / HM-1:IMSS / ABRM) protein is Phosphoglucomutase.